A 397-amino-acid polypeptide reads, in one-letter code: DNA-directed RNA polymerase subunit Rpo1C (397 aa).

It belongs to the RNA polymerase beta' chain family. As to quaternary structure, part of the RNA polymerase complex.

The protein resides in the cytoplasm. It catalyses the reaction RNA(n) + a ribonucleoside 5'-triphosphate = RNA(n+1) + diphosphate. In terms of biological role, DNA-dependent RNA polymerase (RNAP) catalyzes the transcription of DNA into RNA using the four ribonucleoside triphosphates as substrates. Forms part of the jaw domain. The chain is DNA-directed RNA polymerase subunit Rpo1C from Methanococcus aeolicus (strain ATCC BAA-1280 / DSM 17508 / OCM 812 / Nankai-3).